The chain runs to 359 residues: Peptide chain release factor 1 (359 aa).

N5-methylglutamine is present on Gln-236.

Belongs to the prokaryotic/mitochondrial release factor family. In terms of processing, methylated by PrmC. Methylation increases the termination efficiency of RF1.

It is found in the cytoplasm. In terms of biological role, peptide chain release factor 1 directs the termination of translation in response to the peptide chain termination codons UAG and UAA. In Streptococcus pyogenes serotype M12 (strain MGAS2096), this protein is Peptide chain release factor 1.